The sequence spans 670 residues: Oligopeptidase PepF (670 aa).

Residue histidine 456 coordinates Zn(2+). Glutamate 457 is an active-site residue. The Zn(2+) site is built by histidine 460 and histidine 463.

The protein belongs to the peptidase M3B family. The cofactor is Zn(2+).

The protein localises to the cytoplasm. Functionally, overexpression results in inhibition of sporulation initiation. This sporulation deficiency could be the result of hydrolysis by PepF of the PhrA peptide, a phosphatase regulator. Thus, overexpression of PepF appears to act at the level of the phosphorelay, most likely through modulation of the negative role played by phosphatases. Overexpression of PepF also affects the activity of the competence and sporulation stimulating factor PhrC. The protein is Oligopeptidase PepF of Bacillus subtilis (strain 168).